The following is a 1295-amino-acid chain: Phosphoribosylformylglycinamidine synthase (1295 aa).

Residues 305 to 327 form a disordered region; it reads WPGAATGSGGEIRDEGATGRGAK. ATP is bound by residues 307–318, 386–388, and Ala-678; these read GAATGSGGEIRD and TGY. Residues Asp-679, Glu-718, Asn-722, and Asp-884 each contribute to the Mg(2+) site. Ser-886 serves as a coordination point for ATP. In terms of domain architecture, Glutamine amidotransferase type-1 spans 1042–1295; sequence VAVLREQGVN…IFRNARKQLG (254 aa). Cys-1135 acts as the Nucleophile in catalysis. Residues His-1260 and Glu-1262 contribute to the active site.

In the N-terminal section; belongs to the FGAMS family. As to quaternary structure, monomer.

It localises to the cytoplasm. It catalyses the reaction N(2)-formyl-N(1)-(5-phospho-beta-D-ribosyl)glycinamide + L-glutamine + ATP + H2O = 2-formamido-N(1)-(5-O-phospho-beta-D-ribosyl)acetamidine + L-glutamate + ADP + phosphate + H(+). It participates in purine metabolism; IMP biosynthesis via de novo pathway; 5-amino-1-(5-phospho-D-ribosyl)imidazole from N(2)-formyl-N(1)-(5-phospho-D-ribosyl)glycinamide: step 1/2. Its function is as follows. Phosphoribosylformylglycinamidine synthase involved in the purines biosynthetic pathway. Catalyzes the ATP-dependent conversion of formylglycinamide ribonucleotide (FGAR) and glutamine to yield formylglycinamidine ribonucleotide (FGAM) and glutamate. The sequence is that of Phosphoribosylformylglycinamidine synthase from Salmonella typhi.